The sequence spans 213 residues: N-(5'-phosphoribosyl)anthranilate isomerase (213 aa).

The protein belongs to the TrpF family.

It catalyses the reaction N-(5-phospho-beta-D-ribosyl)anthranilate = 1-(2-carboxyphenylamino)-1-deoxy-D-ribulose 5-phosphate. It participates in amino-acid biosynthesis; L-tryptophan biosynthesis; L-tryptophan from chorismate: step 3/5. The polypeptide is N-(5'-phosphoribosyl)anthranilate isomerase (Caulobacter sp. (strain K31)).